The chain runs to 327 residues: tRNA uridine(34) hydroxylase (327 aa).

In terms of domain architecture, Rhodanese spans Q122 to W218. The Cysteine persulfide intermediate role is filled by C178.

The protein belongs to the TrhO family.

The enzyme catalyses uridine(34) in tRNA + AH2 + O2 = 5-hydroxyuridine(34) in tRNA + A + H2O. In terms of biological role, catalyzes oxygen-dependent 5-hydroxyuridine (ho5U) modification at position 34 in tRNAs. The protein is tRNA uridine(34) hydroxylase of Chlamydia trachomatis serovar A (strain ATCC VR-571B / DSM 19440 / HAR-13).